We begin with the raw amino-acid sequence, 413 residues long: Multidrug resistance protein MdtA (413 aa).

The first 32 residues, 1–32 (MNAKRIRGLLIFAAVIAIAVLIWRHFTQTSPA), serve as a signal peptide directing secretion. Over residues 32-46 (AAPGTSEQHAARTSH) the composition is skewed to polar residues. The interval 32-59 (AAPGTSEQHAARTSHSGNNSSGNGGGRR) is disordered.

Belongs to the membrane fusion protein (MFP) (TC 8.A.1) family. As to quaternary structure, part of a tripartite efflux system composed of MdtA, MdtB and MdtC.

It localises to the cell inner membrane. In Pectobacterium carotovorum subsp. carotovorum (strain PC1), this protein is Multidrug resistance protein MdtA.